The primary structure comprises 152 residues: D-aminoacyl-tRNA deacylase (152 aa).

A Gly-cisPro motif, important for rejection of L-amino acids motif is present at residues 137-138 (GP).

It belongs to the DTD family. Homodimer.

The protein localises to the cytoplasm. The catalysed reaction is glycyl-tRNA(Ala) + H2O = tRNA(Ala) + glycine + H(+). The enzyme catalyses a D-aminoacyl-tRNA + H2O = a tRNA + a D-alpha-amino acid + H(+). Its function is as follows. An aminoacyl-tRNA editing enzyme that deacylates mischarged D-aminoacyl-tRNAs. Also deacylates mischarged glycyl-tRNA(Ala), protecting cells against glycine mischarging by AlaRS. Acts via tRNA-based rather than protein-based catalysis; rejects L-amino acids rather than detecting D-amino acids in the active site. By recycling D-aminoacyl-tRNA to D-amino acids and free tRNA molecules, this enzyme counteracts the toxicity associated with the formation of D-aminoacyl-tRNA entities in vivo and helps enforce protein L-homochirality. This Thermus aquaticus protein is D-aminoacyl-tRNA deacylase.